The chain runs to 372 residues: Cytochrome b (372 aa).

The next 4 membrane-spanning stretches (helical) occupy residues 25–45, 69–90, 105–125, and 170–190; these read FGSM…FLAI, WIIQ…YTHI, WLSG…GYVL, and FFAL…IHII. The heme b site is built by histidine 75 and histidine 89. The heme b site is built by histidine 174 and histidine 188. Histidine 193 provides a ligand contact to a ubiquinone. Transmembrane regions (helical) follow at residues 218–238, 280–300, 312–332, and 339–358; these read YKDT…MSFM, LGGT…PFTH, LTQI…WSAT, and FIFI…IINP.

Belongs to the cytochrome b family. In terms of assembly, the cytochrome bc1 complex contains 3 respiratory subunits (MT-CYB, CYC1 and UQCRFS1), 2 core proteins (UQCRC1 and UQCRC2) and probably 6 low-molecular weight proteins. Requires heme b as cofactor.

It localises to the mitochondrion inner membrane. Component of the ubiquinol-cytochrome c reductase complex (complex III or cytochrome b-c1 complex) that is part of the mitochondrial respiratory chain. The b-c1 complex mediates electron transfer from ubiquinol to cytochrome c. Contributes to the generation of a proton gradient across the mitochondrial membrane that is then used for ATP synthesis. In Hydrophis semperi (Lake Taal snake), this protein is Cytochrome b (MT-CYB).